The following is a 128-amino-acid chain: Small ribosomal subunit protein bS6 (128 aa).

The protein belongs to the bacterial ribosomal protein bS6 family.

In terms of biological role, binds together with bS18 to 16S ribosomal RNA. In Geotalea uraniireducens (strain Rf4) (Geobacter uraniireducens), this protein is Small ribosomal subunit protein bS6.